Here is a 699-residue protein sequence, read N- to C-terminus: Dymeclin (699 aa).

Glycine 2 carries N-myristoyl glycine lipidation. Serine 346 is modified (phosphoserine).

This sequence belongs to the dymeclin family.

The polypeptide is Dymeclin (Drosophila melanogaster (Fruit fly)).